The sequence spans 179 residues: Insulin-like growth factor 2 (179 aa).

The first 24 residues, 1 to 24 (MGITAGKSMLALLAFLAFASCCYA), serve as a signal peptide directing secretion. Positions 25–52 (AYRPSETLCGGELVDTLQFVCGDRGFYF) are b. 3 cysteine pairs are disulfide-bonded: C33–C71, C45–C84, and C70–C75. A c region spans residues 53-64 (SRPSSRINRRSR). Residues 65-85 (GIVEECCFRSCDLALLETYCA) are a. The tract at residues 86–91 (APAKSE) is d. Residues 92 to 179 (RDVSASTTVL…GGASSEASSD (88 aa)) constitute a propeptide, e peptide. The O-linked (GalNAc...) threonine glycan is linked to T106. Residue S154 is glycosylated (O-linked (GalNAc...) serine). Residues 160–179 (ALPTQDPATHGGASSEASSD) form a disordered region. T163 carries an O-linked (GalNAc...) threonine glycan.

This sequence belongs to the insulin family. Interacts with MYORG; this interaction is required for IGF2 secretion. Interacts with integrins ITGAV:ITGB3 and ITGA6:ITGB4; integrin-binding is required for IGF2 signaling. Interacts with IGFBP2. Post-translationally, proteolytically processed by PCSK4, proIGF2 is cleaved at Arg-128 and Arg-92 to generate big-IGF2 and mature IGF2.

The protein localises to the secreted. The insulin-like growth factors possess growth-promoting activity. Major fetal growth hormone in mammals. Plays a key role in regulating fetoplacental development. IGF2 is influenced by placental lactogen. Also involved in tissue differentiation. In adults, involved in glucose metabolism in adipose tissue, skeletal muscle and liver. Acts as a ligand for integrin which is required for IGF2 signaling. Positively regulates myogenic transcription factor MYOD1 function by facilitating the recruitment of transcriptional coactivators, thereby controlling muscle terminal differentiation. Inhibits myoblast differentiation and modulates metabolism via increasing the mitochondrial respiration rate. Its function is as follows. Preptin undergoes glucose-mediated co-secretion with insulin, and acts as a physiological amplifier of glucose-mediated insulin secretion. Exhibits osteogenic properties by increasing osteoblast mitogenic activity through phosphoactivation of MAPK1 and MAPK3. This Ovis aries (Sheep) protein is Insulin-like growth factor 2.